A 294-amino-acid polypeptide reads, in one-letter code: Thymidylate synthase (294 aa).

DUMP-binding positions include Arg31 and 156-157; that span reads RR. The Nucleophile role is filled by Cys176. DUMP-binding positions include 196–199, Asn207, and 237–239; these read RSAD and HIY. Asp199 is a binding site for (6R)-5,10-methylene-5,6,7,8-tetrahydrofolate. Position 293 (Ala293) interacts with (6R)-5,10-methylene-5,6,7,8-tetrahydrofolate.

Belongs to the thymidylate synthase family. As to quaternary structure, homodimer.

It catalyses the reaction dUMP + (6R)-5,10-methylene-5,6,7,8-tetrahydrofolate = 7,8-dihydrofolate + dTMP. It participates in pyrimidine metabolism; dTTP biosynthesis. This Saimiri sciureus (Common squirrel monkey) protein is Thymidylate synthase (70).